Reading from the N-terminus, the 554-residue chain is Endochitinase (554 aa).

An N-terminal signal peptide occupies residues 1-19; the sequence is MRATLATLAVLALATAVQS. A GH18 domain is found at 23–398; the sequence is ARIVCYFSNW…KILHKHMSSY (376 aa). A disulfide bond links Cys-27 and Cys-52. 76–77 is a chitin binding site; it reads LD. Asn-85 carries an N-linked (GlcNAc...) asparagine glycan. 103–106 serves as a coordination point for chitin; sequence GGWA. The active-site Proton donor is the Glu-146. Residues Tyr-147 and 213-216 contribute to the chitin site; that span reads MSYD. A glycan (N-linked (GlcNAc...) asparagine) is linked at Asn-303. Trp-370 contributes to the chitin binding site. The disordered stretch occupies residues 398–494; the sequence is YTVPPPHTEN…VPPTENEVDG (97 aa). Positions 431-457 are enriched in low complexity; sequence PTTTTAKPASTTKTTVKTTTTTTAKPP. A compositionally biased stretch (basic and acidic residues) spans 467–477; it reads INVRPEPKPEP. The region spanning 495–553 is the Chitin-binding type-2 domain; sequence SEICNSDQDYIPDKKHCDKYWRCVNGEAMQFSCQHGTVFNVELNVCDWPSNATRRECQQ. A disulfide bridge links Cys-527 with Cys-540. Asn-545 carries N-linked (GlcNAc...) asparagine glycosylation.

The protein belongs to the glycosyl hydrolase 18 family. Chitinase class II subfamily. As to expression, epidermis and gut.

Its subcellular location is the secreted. The enzyme catalyses Random endo-hydrolysis of N-acetyl-beta-D-glucosaminide (1-&gt;4)-beta-linkages in chitin and chitodextrins.. Digests chitin in the exoskeleton during the molting process. This Manduca sexta (Tobacco hawkmoth) protein is Endochitinase.